The primary structure comprises 134 residues: UPF0412 protein YaaI (134 aa).

Positions 1–23 (MRSVLTISASLLFGLALSSVAHA) are cleaved as a signal peptide.

The protein belongs to the UPF0412 family.

This chain is UPF0412 protein YaaI, found in Salmonella paratyphi B (strain ATCC BAA-1250 / SPB7).